The following is a 1275-amino-acid chain: Inner capsid protein lambda-1 (1275 aa).

The segment covering 1 to 12 (MKRIPRKTRGKS) has biased composition (basic residues). The disordered stretch occupies residues 1–147 (MKRIPRKTRG…NVDNEGGDNQ (147 aa)). Residues 18-35 (DSTERADDGSAQLRDKQS) show a composition bias toward basic and acidic residues. A compositionally biased stretch (polar residues) spans 55–66 (TRPSLQTVQKAT). Basic and acidic residues-rich tracts occupy residues 80 to 98 (AVDK…HVEA) and 105 to 117 (ATKR…DKQK). The span at 118–139 (AQVTYNDTGINNANELSRSGNV) shows a compositional bias: polar residues. Residues 181 to 203 (YQCHVCSAVLFSPLDLDAHVASH) form a C2H2-type zinc finger.

Belongs to the turreted BTV-fold inner capsid family. As to quaternary structure, homodecamer; each decamer is made up of two conformers of VP2, called VP2A and VP2B. 12 homodecamers assemble to form an icosahedral capsid. Interacts with protein mu-NS; in viral inclusions. The cofactor is Mg(2+). Requires Mn(2+) as cofactor.

It is found in the virion. The catalysed reaction is ATP + H2O = ADP + phosphate + H(+). In terms of biological role, inner capsid protein that self-assembles to form an icosahedral capsid with a T=2 symmetry, which consists of 120 copies of VP2, with channels at each of its five-fold vertices. This capsid constitutes the innermost concentric layer of the viral mature particle. Displays NTPase, RNA 5'-triphosphatase (RTPase) and RNA helicase activities and probably participates in transcription of the viral genome. Helicase activity might be involved in unwinding or reannealing dsRNA during RNA synthesis. RTPase enzymatic activity represents the first step in RNA capping, which yields a 5'-diphosphorylated plus-strand RNA. The sequence is that of Inner capsid protein lambda-1 from Reovirus type 2 (strain D5/Jones) (T2J).